We begin with the raw amino-acid sequence, 247 residues long: MDRIKCTVAYDGMHFCGYQIQPQHRTVQQEIEKALQKLHKGELVRVQASGRTDSTVHAKGQVIHFDTPLSLEEWQWNNALNTMLPDDIVITQVEKKTEEFHARYGVERKEYRYRVLLSKTADVFRRNYVYQYPYPLEINAIRKAIPYFIGTHDFTSFCSAKTDKKDKVRTIYEIELIEQDDELIFRFVGNGFLYNMVRIIVGTLLSVGQGKLDPDSIPEILAKQNRQFAGKMAPGHGLYLWQVNYNN.

D53 acts as the Nucleophile in catalysis. Position 111 (Y111) interacts with substrate.

It belongs to the tRNA pseudouridine synthase TruA family. In terms of assembly, homodimer.

It catalyses the reaction uridine(38/39/40) in tRNA = pseudouridine(38/39/40) in tRNA. In terms of biological role, formation of pseudouridine at positions 38, 39 and 40 in the anticodon stem and loop of transfer RNAs. This chain is tRNA pseudouridine synthase A 1, found in Bacillus cereus (strain ATCC 10987 / NRS 248).